The sequence spans 775 residues: DENN domain-containing protein 1B (775 aa).

The uDENN domain maps to 14 to 143 (DLVLKVKCHA…YNHPVPKANT (130 aa)). The cDENN domain occupies 180-316 (GLPTIPESRN…VVSALKNKLK (137 aa)). A dDENN domain is found at 318 to 395 (QSTATGDGVA…DGRLAKLNAG (78 aa)). The FXDXF motif signature appears at 398-402 (FSDVF). Tyr-520 is modified (phosphotyrosine). Phosphoserine is present on residues Ser-535, Ser-536, Ser-549, and Ser-552. Positions 566 to 575 (DLLGEILDTL) match the Clathrin box motif. 2 disordered regions span residues 635–654 (DSALHGKHLPPSPRKRVSSS) and 671–706 (HLGADNVSDPTSGLDFQLTSPEVSQTDKGKTEKRET). Over residues 639-651 (HGKHLPPSPRKRV) the composition is skewed to basic residues. 2 positions are modified to phosphoserine: Ser-652 and Ser-653. Over residues 695 to 706 (QTDKGKTEKRET) the composition is skewed to basic and acidic residues.

In terms of assembly, interacts with RAB35. Interacts with clathrin heavy chain/CLTC. Interacts with components of the adapter protein complex 2 (AP-2) AP2A2 and AP2B1. Interacts with CD3E. Phosphorylated on serine and/or threonine, possibly regulating the guanine nucleotide exchange factor (GEF) activity. Highly expressed in dendritic and natural killer cells and at lower levels in other myeloid lineage cells and in pituitary. Significantly up-regulated in effector memory T-cells as compared with naive T-cells.

It localises to the cytoplasm. The protein resides in the cytosol. The protein localises to the cytoplasmic vesicle. It is found in the clathrin-coated vesicle. In terms of biological role, guanine nucleotide exchange factor (GEF) for RAB35 that acts as a regulator of T-cell receptor (TCR) internalization in TH2 cells. Acts by promoting the exchange of GDP to GTP, converting inactive GDP-bound RAB35 into its active GTP-bound form. Plays a role in clathrin-mediated endocytosis. Controls cytokine production in TH2 lymphocytes by controlling the rate of TCR internalization and routing to endosomes: acts by mediating clathrin-mediated endocytosis of TCR via its interaction with the adapter protein complex 2 (AP-2) and GEF activity. Dysregulation leads to impaired TCR down-modulation and recycling, affecting cytokine production in TH2 cells. The chain is DENN domain-containing protein 1B from Homo sapiens (Human).